The sequence spans 218 residues: Small ribosomal subunit protein uS3 (218 aa).

The 69-residue stretch at 39 to 107 folds into the KH type-2 domain; sequence IRDYIKSKLL…QISINIVEIK (69 aa).

It belongs to the universal ribosomal protein uS3 family. Part of the 30S ribosomal subunit. Forms a tight complex with proteins S10 and S14.

Binds the lower part of the 30S subunit head. Binds mRNA in the 70S ribosome, positioning it for translation. This is Small ribosomal subunit protein uS3 from Desulforudis audaxviator (strain MP104C).